Consider the following 445-residue polypeptide: MKLLSPLDQMFARMEAPRTPMHIGAFAVFDLPKGAPRRFIRDLYEAISQLAFLPFPFDSVIAGGASMAYWRQVQPDPSYHVRLSALPYPGTGRDLGALVERLHSTPLDMAKPLWELHLIEGLTGRQFAMYFKAHHCAVDGLGGVNLIKSWLTTDPEAPPGSGKPEPFGDDYDLASVLAAATTKRAVEGVSAVSELAGRLSSMVLGANSSVRAALTTPRTPFNTRVNRHRRLAVQVLKLPRLKAVAHATDCTVNDVILASVGGACRRYLQELGDLPTNTLTASVPVGFERDADTVNAASGFVAPLGTSIEDPVARLTTISASTTRGKAELLAMSPNALQHYSVFGLLPIAVGQKTGALGVIPPLFNFTVSNVVLSKDPLYLSGAKLDVIVPMSFLCDGYGLNVTLVGYTDKVVLGFLGCRDTLPHLQRLAQYTGAAFEELETAALP.

The active-site Proton acceptor is the histidine 135.

Belongs to the long-chain O-acyltransferase family.

The catalysed reaction is an acyl-CoA + a 1,2-diacyl-sn-glycerol = a triacyl-sn-glycerol + CoA. It catalyses the reaction di-(9Z)-octadecenoylglycerol + (9Z)-octadecenoyl-CoA = 1,2,3-tri-(9Z-octadecenoyl)-glycerol + CoA. Its pathway is glycerolipid metabolism; triacylglycerol biosynthesis. Its function is as follows. Catalyzes the terminal and only committed step in triacylglycerol synthesis by using diacylglycerol and fatty acyl CoA as substrates. Required for storage lipid synthesis. Upon expression in E.coli functions weakly as a triacylglycerol synthase, making triacylglycerol (TG) from diolein and long-chain fatty acyl-CoA. Has very weak wax synthase activity, incorporating palmityl alcohol into wax esters in the presence of palmitoyl-CoA. The chain is Putative diacyglycerol O-acyltransferase Rv2285 from Mycobacterium tuberculosis (strain ATCC 25618 / H37Rv).